Reading from the N-terminus, the 340-residue chain is Transcription initiation factor IIB (340 aa).

The TFIIB-type zinc-finger motif lies at 16 to 49 (VKMICSECREDPPNLVEEFSSGDTVCGSCGLVLG). Zn(2+)-binding residues include Cys20, Cys23, Cys41, and Cys44. 2 repeat units span residues 128-204 (MCDA…TLQR) and 239-315 (FCNR…LLHA).

This sequence belongs to the TFIIB family. As to quaternary structure, associates with TFIID-IIA (DA complex) to form TFIID-IIA-IIB (DAB-complex) which is then recognized by polymerase II.

It localises to the nucleus. Functionally, general factor that plays a major role in the activation of eukaryotic genes transcribed by RNA polymerase II. This Schizosaccharomyces pombe (strain 972 / ATCC 24843) (Fission yeast) protein is Transcription initiation factor IIB (sua7).